Here is a 198-residue protein sequence, read N- to C-terminus: Beta-crystallin A1-1 (198 aa).

Residues 1-13 form an N-terminal arm region; it reads MAQINPLPVPLGP. Beta/gamma crystallin 'Greek key' domains lie at 14-53 and 54-100; these read WKITVYDQENFQGKRMEFTSSCTNIMECGFDNIRSLKVEC and GAWI…RPIC. A connecting peptide region spans residues 101-106; that stretch reads SANHKE. 2 consecutive Beta/gamma crystallin 'Greek key' domains span residues 107-148 and 149-197; these read SKLV…KVQC and GAWV…RRIQ.

It belongs to the beta/gamma-crystallin family. Homo/heterodimer, or complexes of higher-order. The structure of beta-crystallin oligomers seems to be stabilized through interactions between the N-terminal arms. Post-translationally, the N-terminus is blocked.

Its function is as follows. Crystallins are the dominant structural components of the vertebrate eye lens. This Aquarana catesbeiana (American bullfrog) protein is Beta-crystallin A1-1.